A 352-amino-acid polypeptide reads, in one-letter code: N-acetyl-gamma-glutamyl-phosphate reductase (352 aa).

Residue C155 is part of the active site.

Belongs to the NAGSA dehydrogenase family. Type 1 subfamily.

It localises to the cytoplasm. The catalysed reaction is N-acetyl-L-glutamate 5-semialdehyde + phosphate + NADP(+) = N-acetyl-L-glutamyl 5-phosphate + NADPH + H(+). It functions in the pathway amino-acid biosynthesis; L-arginine biosynthesis; N(2)-acetyl-L-ornithine from L-glutamate: step 3/4. Catalyzes the NADPH-dependent reduction of N-acetyl-5-glutamyl phosphate to yield N-acetyl-L-glutamate 5-semialdehyde. The polypeptide is N-acetyl-gamma-glutamyl-phosphate reductase (Crocosphaera subtropica (strain ATCC 51142 / BH68) (Cyanothece sp. (strain ATCC 51142))).